Reading from the N-terminus, the 344-residue chain is Photosystem II protein D1 (344 aa).

Position 2 is an N-acetylthreonine (Thr-2). Position 2 is a phosphothreonine (Thr-2). Transmembrane regions (helical) follow at residues 29 to 46, 118 to 133, and 142 to 156; these read YIGW…TATS, HFLL…EWEL, and WIAV…AATA. Position 118 (His-118) interacts with chlorophyll a. Tyr-126 is a binding site for pheophytin a. [CaMn4O5] cluster-binding residues include Asp-170 and Glu-189. A helical transmembrane segment spans residues 197–218; it reads FHMLGVAGVFGGSLFSAMHGSL. Position 198 (His-198) interacts with chlorophyll a. A quinone contacts are provided by residues His-215 and 264 to 265; that span reads SF. His-215 contributes to the Fe cation binding site. His-272 is a binding site for Fe cation. The helical transmembrane segment at 274–288 threads the bilayer; that stretch reads FLAAWPVVCIWFTAL. 4 residues coordinate [CaMn4O5] cluster: His-332, Glu-333, Asp-342, and Ala-344.

The protein belongs to the reaction center PufL/M/PsbA/D family. In terms of assembly, PSII is composed of 1 copy each of membrane proteins PsbA, PsbB, PsbC, PsbD, PsbE, PsbF, PsbH, PsbI, PsbJ, PsbK, PsbL, PsbM, PsbT, PsbX, PsbY, PsbZ, Psb30/Ycf12, at least 3 peripheral proteins of the oxygen-evolving complex and a large number of cofactors. It forms dimeric complexes. The D1/D2 heterodimer binds P680, chlorophylls that are the primary electron donor of PSII, and subsequent electron acceptors. It shares a non-heme iron and each subunit binds pheophytin, quinone, additional chlorophylls, carotenoids and lipids. D1 provides most of the ligands for the Mn4-Ca-O5 cluster of the oxygen-evolving complex (OEC). There is also a Cl(-1) ion associated with D1 and D2, which is required for oxygen evolution. The PSII complex binds additional chlorophylls, carotenoids and specific lipids. is required as a cofactor. Tyr-161 forms a radical intermediate that is referred to as redox-active TyrZ, YZ or Y-Z.

The protein resides in the plastid. It localises to the chloroplast thylakoid membrane. The enzyme catalyses 2 a plastoquinone + 4 hnu + 2 H2O = 2 a plastoquinol + O2. Photosystem II (PSII) is a light-driven water:plastoquinone oxidoreductase that uses light energy to abstract electrons from H(2)O, generating O(2) and a proton gradient subsequently used for ATP formation. It consists of a core antenna complex that captures photons, and an electron transfer chain that converts photonic excitation into a charge separation. The D1/D2 (PsbA/PsbD) reaction center heterodimer binds P680, the primary electron donor of PSII as well as several subsequent electron acceptors. In Staurastrum punctulatum (Green alga), this protein is Photosystem II protein D1.